The chain runs to 248 residues: Probable transcriptional regulatory protein MCA1220 (248 aa).

The protein belongs to the TACO1 family.

Its subcellular location is the cytoplasm. The sequence is that of Probable transcriptional regulatory protein MCA1220 from Methylococcus capsulatus (strain ATCC 33009 / NCIMB 11132 / Bath).